A 793-amino-acid polypeptide reads, in one-letter code: Probable phosphoketolase (793 aa).

The protein belongs to the XFP family. The cofactor is thiamine diphosphate.

The sequence is that of Probable phosphoketolase from Rhodopirellula baltica (strain DSM 10527 / NCIMB 13988 / SH1).